We begin with the raw amino-acid sequence, 111 residues long: UPF0342 protein SAG1376 (111 aa).

Over residues 52–63 the composition is skewed to polar residues; the sequence is QEMMQSGQMPSQ. A disordered region spans residues 52-71; it reads QEMMQSGQMPSQEEQDEMSK.

The protein belongs to the UPF0342 family.

This Streptococcus agalactiae serotype V (strain ATCC BAA-611 / 2603 V/R) protein is UPF0342 protein SAG1376.